Consider the following 296-residue polypeptide: Cytidine deaminase (296 aa).

CMP/dCMP-type deaminase domains are found at residues 47-167 (TEAE…FGPK) and 186-296 (DSAD…IDPV). Position 88–90 (88–90 (NLE)) interacts with substrate. Histidine 101 provides a ligand contact to Zn(2+). The Proton donor role is filled by glutamate 103. The Zn(2+) site is built by cysteine 128 and cysteine 131.

The protein belongs to the cytidine and deoxycytidylate deaminase family. Homodimer. Zn(2+) serves as cofactor.

The enzyme catalyses cytidine + H2O + H(+) = uridine + NH4(+). The catalysed reaction is 2'-deoxycytidine + H2O + H(+) = 2'-deoxyuridine + NH4(+). This enzyme scavenges exogenous and endogenous cytidine and 2'-deoxycytidine for UMP synthesis. The sequence is that of Cytidine deaminase from Shewanella baltica (strain OS155 / ATCC BAA-1091).